We begin with the raw amino-acid sequence, 69 residues long: Small ribosomal subunit protein bS21 (69 aa).

This sequence belongs to the bacterial ribosomal protein bS21 family.

This is Small ribosomal subunit protein bS21 from Borrelia duttonii (strain Ly).